The chain runs to 939 residues: Nonsense-mediated mRNA decay factor SMG8 (939 aa).

Disordered stretches follow at residues 561–600 and 617–645; these read KICT…QLSP and LNES…ADTE. Over residues 567 to 587 the composition is skewed to acidic residues; sequence GEDENEDGETEEADEDTEEKE. Residues 617-629 show a composition bias toward low complexity; that stretch reads LNESQESSEQLSG.

It belongs to the SMG8 family.

Functionally, involved in nonsense-mediated decay (NMD) of mRNAs containing premature stop codons. Probable component of kinase complex containing nonC and recruited to stalled ribosomes. In Drosophila ananassae (Fruit fly), this protein is Nonsense-mediated mRNA decay factor SMG8.